A 256-amino-acid polypeptide reads, in one-letter code: Hydroxyacylglutathione hydrolase (256 aa).

Zn(2+) contacts are provided by His-55, His-57, Asp-59, His-60, His-113, Asp-132, and His-170.

The protein belongs to the metallo-beta-lactamase superfamily. Glyoxalase II family. In terms of assembly, monomer. The cofactor is Zn(2+).

It catalyses the reaction an S-(2-hydroxyacyl)glutathione + H2O = a 2-hydroxy carboxylate + glutathione + H(+). It participates in secondary metabolite metabolism; methylglyoxal degradation; (R)-lactate from methylglyoxal: step 2/2. In terms of biological role, thiolesterase that catalyzes the hydrolysis of S-D-lactoyl-glutathione to form glutathione and D-lactic acid. The polypeptide is Hydroxyacylglutathione hydrolase (Methylococcus capsulatus (strain ATCC 33009 / NCIMB 11132 / Bath)).